The primary structure comprises 264 residues: tRNA (guanine-N(1)-)-methyltransferase (264 aa).

S-adenosyl-L-methionine-binding positions include glycine 125 and 145–150 (LGDFVL).

Belongs to the RNA methyltransferase TrmD family. As to quaternary structure, homodimer.

It is found in the cytoplasm. The catalysed reaction is guanosine(37) in tRNA + S-adenosyl-L-methionine = N(1)-methylguanosine(37) in tRNA + S-adenosyl-L-homocysteine + H(+). Specifically methylates guanosine-37 in various tRNAs. The protein is tRNA (guanine-N(1)-)-methyltransferase of Burkholderia vietnamiensis (strain G4 / LMG 22486) (Burkholderia cepacia (strain R1808)).